Reading from the N-terminus, the 461-residue chain is Phosphoglucosamine mutase (461 aa).

Serine 118 (phosphoserine intermediate) is an active-site residue. Serine 118, aspartate 255, aspartate 257, and aspartate 259 together coordinate Mg(2+). At serine 118 the chain carries Phosphoserine.

It belongs to the phosphohexose mutase family. Mg(2+) serves as cofactor. Post-translationally, activated by phosphorylation.

It catalyses the reaction alpha-D-glucosamine 1-phosphate = D-glucosamine 6-phosphate. Its function is as follows. Catalyzes the conversion of glucosamine-6-phosphate to glucosamine-1-phosphate. This chain is Phosphoglucosamine mutase, found in Acidothermus cellulolyticus (strain ATCC 43068 / DSM 8971 / 11B).